The primary structure comprises 515 residues: SWI/SNF-related matrix-associated actin-dependent regulator of chromatin subfamily D member 1 (515 aa).

Residues 1–128 (MAARAGFQSV…RNHNAKKKKM (128 aa)) form a disordered region. The segment covering 14-23 (GGAGASGGAG) has biased composition (gly residues). The interval 43–167 (APGQGLYRSP…DQTIMRKRLD (125 aa)) is interaction with ESR1, NR1H4, NR3C1, PGR and SMARCA4. An asymmetric dimethylarginine mark is found at Arg68 and Arg88. Lys101 is covalently cross-linked (Glycyl lysine isopeptide (Lys-Gly) (interchain with G-Cter in SUMO2)). Over residues 103–117 (PAPQQIKQVQQQAVQ) the composition is skewed to low complexity. The tract at residues 168–474 (IQEALKRPIK…VMTDVVGNSE (307 aa)) is interaction with SMARCC1 and SMARCC2. Residues 180–515 (RKLRIFISNT…LEQALGIRNT (336 aa)) are necessary for GR/NR3C1-mediated remodeling and transcription from chromatin; required for GR/NR3C1 interaction with the BRG1/SMARCA4 complex in vivo. Thr203 bears the Phosphothreonine mark. Lys223 is subject to N6-acetyllysine. The SWIB/MDM2 domain maps to 290–367 (YQPPQFKLDP…PQRLHALLMP (78 aa)). Residues 412–440 (ASQQEIATLDNKIHETIETINQLKTQREF) are a coiled coil.

This sequence belongs to the SMARCD family. As to quaternary structure, component of the multiprotein chromatin-remodeling complexes SWI/SNF: SWI/SNF-A (BAF), SWI/SNF-B (PBAF) and related complexes. The canonical complex contains a catalytic subunit (either SMARCA4/BRG1/BAF190A or SMARCA2/BRM/BAF190B), and at least SMARCE1, ACTL6A/BAF53, SMARCC1/BAF155, SMARCC2/BAF170, and SMARCB1/SNF5/BAF47. Other subunits specific to each of the complexes may also be present permitting several possible combinations developmentally and tissue specific. Component of the BAF complex, which includes at least actin (ACTB), ARID1A/BAF250A, ARID1B/BAF250B, SMARCA2/BRM, SMARCA4/BRG1/BAF190A, ACTL6A/BAF53, ACTL6B/BAF53B, SMARCE1/BAF57, SMARCC1/BAF155, SMARCC2/BAF170, SMARCB1/SNF5/INI1, and one or more SMARCD1/BAF60A, SMARCD2/BAF60B, or SMARCD3/BAF60C. In muscle cells, the BAF complex also contains DPF3. Component of neural progenitors-specific chromatin remodeling complex (npBAF complex) composed of at least, ARID1A/BAF250A or ARID1B/BAF250B, SMARCD1/BAF60A, SMARCD3/BAF60C, SMARCA2/BRM/BAF190B, SMARCA4/BRG1/BAF190A, SMARCB1/BAF47, SMARCC1/BAF155, SMARCE1/BAF57, SMARCC2/BAF170, PHF10/BAF45A, ACTL6A/BAF53A and actin. Component of neuron-specific chromatin remodeling complex (nBAF complex) composed of at least, ARID1A/BAF250A or ARID1B/BAF250B, SMARCD1/BAF60A, SMARCD3/BAF60C, SMARCA2/BRM/BAF190B, SMARCA4/BRG1/BAF190A, SMARCB1/BAF47, SMARCC1/BAF155, SMARCE1/BAF57, SMARCC2/BAF170, DPF1/BAF45B, DPF3/BAF45C, ACTL6B/BAF53B and actin. Component of the SWI/SNF-B (PBAF) chromatin remodeling complex, at least composed of SMARCA4/BRG1, SMARCB1/BAF47/SNF5, ACTL6A/BAF53A or ACTL6B/BAF53B, SMARCE1/BAF57, SMARCD1/BAF60A, SMARCD2/BAF60B, perhaps SMARCD3/BAF60C, SMARCC1/BAF155, SMARCC2/BAF170, PBRM1/BAF180, ARID2/BAF200 and actin (ACTB). Component of SWI/SNF (GBAF) subcomplex, which includes at least BICRA or BICRAL (mutually exclusive), BRD9, SS18, SMARCA2/BRM, SMARCA4/BRG1/BAF190A, ACTL6A/BAF53, SMARCC1/BAF155, and SMARCD1/BAF60A. Specifically interacts with the VDR heterodimer complex. Interacts with ESR1, NR3C1, NR1H4, PGR, SMARCA4, SMARCC1 and SMARCC2. Interacts with DPF2. Interacts with FOS, FOSB, FOSL1 and FOSL2.

The protein resides in the nucleus. Its function is as follows. Involved in transcriptional activation and repression of select genes by chromatin remodeling (alteration of DNA-nucleosome topology). Component of SWI/SNF chromatin remodeling complexes that carry out key enzymatic activities, changing chromatin structure by altering DNA-histone contacts within a nucleosome in an ATP-dependent manner. Belongs to the neural progenitors-specific chromatin remodeling complex (npBAF complex) and the neuron-specific chromatin remodeling complex (nBAF complex). During neural development a switch from a stem/progenitor to a postmitotic chromatin remodeling mechanism occurs as neurons exit the cell cycle and become committed to their adult state. The transition from proliferating neural stem/progenitor cells to postmitotic neurons requires a switch in subunit composition of the npBAF and nBAF complexes. As neural progenitors exit mitosis and differentiate into neurons, npBAF complexes which contain ACTL6A/BAF53A and PHF10/BAF45A, are exchanged for homologous alternative ACTL6B/BAF53B and DPF1/BAF45B or DPF3/BAF45C subunits in neuron-specific complexes (nBAF). The npBAF complex is essential for the self-renewal/proliferative capacity of the multipotent neural stem cells. The nBAF complex along with CREST plays a role regulating the activity of genes essential for dendrite growth. Has a strong influence on vitamin D-mediated transcriptional activity from an enhancer vitamin D receptor element (VDRE). May be a link between mammalian SWI-SNF-like chromatin remodeling complexes and the vitamin D receptor (VDR) heterodimer. Mediates critical interactions between nuclear receptors and the BRG1/SMARCA4 chromatin-remodeling complex for transactivation. Interacts with AKIRIN2. This Bos taurus (Bovine) protein is SWI/SNF-related matrix-associated actin-dependent regulator of chromatin subfamily D member 1 (SMARCD1).